The sequence spans 172 residues: Protein CapG (172 aa).

The protein belongs to the transferase hexapeptide repeat family.

Its pathway is capsule biogenesis; capsule polysaccharide biosynthesis. Its function is as follows. Required for the biosynthesis of type 1 capsular polysaccharide. The sequence is that of Protein CapG (capG) from Staphylococcus aureus.